The chain runs to 397 residues: Enoyl-[acyl-carrier-protein] reductase [NADH] (397 aa).

Residues 48 to 53 (GASTGY), 74 to 75 (LE), 111 to 112 (DA), and 139 to 140 (LA) contribute to the NAD(+) site. Substrate is bound at residue Y225. Catalysis depends on Y235, which acts as the Proton donor. NAD(+)-binding positions include K244 and 273–275 (VVT).

It belongs to the TER reductase family. Monomer.

It carries out the reaction a 2,3-saturated acyl-[ACP] + NAD(+) = a (2E)-enoyl-[ACP] + NADH + H(+). The protein operates within lipid metabolism; fatty acid biosynthesis. Functionally, involved in the final reduction of the elongation cycle of fatty acid synthesis (FAS II). Catalyzes the reduction of a carbon-carbon double bond in an enoyl moiety that is covalently linked to an acyl carrier protein (ACP). This Tolumonas auensis (strain DSM 9187 / NBRC 110442 / TA 4) protein is Enoyl-[acyl-carrier-protein] reductase [NADH].